We begin with the raw amino-acid sequence, 579 residues long: uncharacterized protein (579 aa).

The next 11 helical transmembrane spans lie at 13-35, 39-61, 66-83, 93-110, 130-152, 162-181, 201-223, 238-257, 264-286, 296-315, and 324-346; these read DLIKQYPLAMSFIFISTAFIPWI, SISRDMIVVLLLPIYFSTVLLLN, ANGLAIAYAILITLAFYF, AYWGLLLIHFVLFVTYPL, LAIVLAGIICICAVLVLNSIEYL, IVPKTLLFIMCFFTPVFFLI, LIVNFIFSPVVILYTLIVYLYLA, YIIMPYIALGLCCQGLRLLL, GFYRVFAYLSIAPLVLLWVGIHT, IRVMLVVLASMMTLFILFSM, and LFSLTACLLLFISTILTSPYYLA.

Its subcellular location is the cell membrane. This is an uncharacterized protein from Pasteurella multocida (strain Pm70).